The primary structure comprises 369 residues: Probable dual-specificity RNA methyltransferase RlmN (369 aa).

The active-site Proton acceptor is Glu-108. The region spanning 114–351 is the Radical SAM core domain; that stretch reads YPDRATLCIS…IAQGVSCTVR (238 aa). A disulfide bridge links Cys-121 with Cys-362. Positions 128, 132, and 135 each coordinate [4Fe-4S] cluster. S-adenosyl-L-methionine contacts are provided by residues 183 to 184, Ser-217, 240 to 242, and Asn-319; these read GE and SLH. Catalysis depends on Cys-362, which acts as the S-methylcysteine intermediate.

It belongs to the radical SAM superfamily. RlmN family. [4Fe-4S] cluster serves as cofactor.

It localises to the cytoplasm. It carries out the reaction adenosine(2503) in 23S rRNA + 2 reduced [2Fe-2S]-[ferredoxin] + 2 S-adenosyl-L-methionine = 2-methyladenosine(2503) in 23S rRNA + 5'-deoxyadenosine + L-methionine + 2 oxidized [2Fe-2S]-[ferredoxin] + S-adenosyl-L-homocysteine. The catalysed reaction is adenosine(37) in tRNA + 2 reduced [2Fe-2S]-[ferredoxin] + 2 S-adenosyl-L-methionine = 2-methyladenosine(37) in tRNA + 5'-deoxyadenosine + L-methionine + 2 oxidized [2Fe-2S]-[ferredoxin] + S-adenosyl-L-homocysteine. Specifically methylates position 2 of adenine 2503 in 23S rRNA and position 2 of adenine 37 in tRNAs. The polypeptide is Probable dual-specificity RNA methyltransferase RlmN (Rhodococcus erythropolis (strain PR4 / NBRC 100887)).